Consider the following 436-residue polypeptide: Chaperone protein dnaJ 16 (436 aa).

In terms of domain architecture, J spans 20-85 (DPYEVLGVLR…EKRRQFDSAG (66 aa)). A coiled-coil region spans residues 291-348 (TQEKEDLRSVEAQILTKRAELAKFETEYREVLVQFTDMTSRYAQEMQSIDELLKQRNE). The disordered stretch occupies residues 360-416 (KRSSSKNRMRKSSFKKAAAKAPAPTEQEEEEEEEEEEEEESSRQKNKKPSTCDKSET). Basic residues predominate over residues 362–377 (SSSKNRMRKSSFKKAA). Over residues 385 to 399 (EQEEEEEEEEEEEEE) the composition is skewed to acidic residues.

Belongs to the DnaJ family. B/II subfamily. As to expression, expressed constitutively in seedlings, roots, leaves, stems, flowers and siliques.

Its subcellular location is the membrane. Its function is as follows. Plays a continuous role in plant development probably in the structural organization of compartments. Seems to not be involved in gravitropism signaling pathway. The chain is Chaperone protein dnaJ 16 (ATJ16) from Arabidopsis thaliana (Mouse-ear cress).